Here is a 28-residue protein sequence, read N- to C-terminus: leu operon leader peptide (28 aa).

Involved in control of the biosynthesis of leucine. The sequence is that of leu operon leader peptide (leuL) from Salmonella typhimurium (strain LT2 / SGSC1412 / ATCC 700720).